The sequence spans 104 residues: MAAKIRRDDEVIVLTGKDKGKRGKVKNVLSSGKIIVEGINLVKKHQKPVPALNQPGGIVEKEAALQISNVALFNSATGKADRVGFRFEDGKKVRFFKSNSETIK.

Belongs to the universal ribosomal protein uL24 family. Part of the 50S ribosomal subunit.

Its function is as follows. One of two assembly initiator proteins, it binds directly to the 5'-end of the 23S rRNA, where it nucleates assembly of the 50S subunit. One of the proteins that surrounds the polypeptide exit tunnel on the outside of the subunit. This chain is Large ribosomal subunit protein uL24, found in Erwinia tasmaniensis (strain DSM 17950 / CFBP 7177 / CIP 109463 / NCPPB 4357 / Et1/99).